Consider the following 103-residue polypeptide: Large ribosomal subunit protein bL21 (103 aa).

It belongs to the bacterial ribosomal protein bL21 family. As to quaternary structure, part of the 50S ribosomal subunit. Contacts protein L20.

Functionally, this protein binds to 23S rRNA in the presence of protein L20. The chain is Large ribosomal subunit protein bL21 from Mycobacteroides abscessus (strain ATCC 19977 / DSM 44196 / CCUG 20993 / CIP 104536 / JCM 13569 / NCTC 13031 / TMC 1543 / L948) (Mycobacterium abscessus).